The following is a 488-amino-acid chain: Glutamate--tRNA ligase (488 aa).

The short motif at 9 to 19 (PSPTGFLHIGG) is the 'HIGH' region element. Zn(2+) is bound by residues Cys112, Cys114, Cys139, and His141. The 'KMSKS' region signature appears at 256–260 (KLSKR). Lys259 is a binding site for ATP.

This sequence belongs to the class-I aminoacyl-tRNA synthetase family. Glutamate--tRNA ligase type 1 subfamily. In terms of assembly, monomer. Requires Zn(2+) as cofactor.

It is found in the cytoplasm. The enzyme catalyses tRNA(Glu) + L-glutamate + ATP = L-glutamyl-tRNA(Glu) + AMP + diphosphate. Its function is as follows. Catalyzes the attachment of glutamate to tRNA(Glu) in a two-step reaction: glutamate is first activated by ATP to form Glu-AMP and then transferred to the acceptor end of tRNA(Glu). This Elusimicrobium minutum (strain Pei191) protein is Glutamate--tRNA ligase.